The primary structure comprises 208 residues: Holliday junction resolvase RecU (208 aa).

Residues 1-25 (MNYPNGKPFNRNKTKVGRTNDHKSS) are disordered. Mg(2+) is bound by residues threonine 87, aspartate 89, glutamate 102, and glutamine 121.

The protein belongs to the RecU family. Mg(2+) is required as a cofactor.

Its subcellular location is the cytoplasm. It catalyses the reaction Endonucleolytic cleavage at a junction such as a reciprocal single-stranded crossover between two homologous DNA duplexes (Holliday junction).. Endonuclease that resolves Holliday junction intermediates in genetic recombination. Cleaves mobile four-strand junctions by introducing symmetrical nicks in paired strands. Promotes annealing of linear ssDNA with homologous dsDNA. Required for DNA repair, homologous recombination and chromosome segregation. The polypeptide is Holliday junction resolvase RecU (Staphylococcus carnosus (strain TM300)).